A 401-amino-acid polypeptide reads, in one-letter code: S-adenosylmethionine synthase (401 aa).

ATP is bound at residue His16. Asp18 contacts Mg(2+). Glu44 provides a ligand contact to K(+). The L-methionine site is built by Glu57 and Gln100. The segment at 100-110 (QSPDIAQGVNE) is flexible loop. Residues 174–176 (DAK), 241–242 (RF), Asp250, 256–257 (RK), Ala273, and Lys277 each bind ATP. An L-methionine-binding site is contributed by Asp250. Lys281 is a binding site for L-methionine.

This sequence belongs to the AdoMet synthase family. In terms of assembly, homotetramer; dimer of dimers. The cofactor is Mg(2+). Requires K(+) as cofactor.

The protein resides in the cytoplasm. It catalyses the reaction L-methionine + ATP + H2O = S-adenosyl-L-methionine + phosphate + diphosphate. It participates in amino-acid biosynthesis; S-adenosyl-L-methionine biosynthesis; S-adenosyl-L-methionine from L-methionine: step 1/1. In terms of biological role, catalyzes the formation of S-adenosylmethionine (AdoMet) from methionine and ATP. The overall synthetic reaction is composed of two sequential steps, AdoMet formation and the subsequent tripolyphosphate hydrolysis which occurs prior to release of AdoMet from the enzyme. The sequence is that of S-adenosylmethionine synthase from Streptococcus equi subsp. zooepidemicus (strain MGCS10565).